Reading from the N-terminus, the 146-residue chain is uncharacterized protein (146 aa).

This is an uncharacterized protein from Orgyia pseudotsugata multicapsid polyhedrosis virus (OpMNPV).